A 341-amino-acid chain; its full sequence is Aromatic amino acid aminotransferase (341 aa).

Residue K213 is modified to N6-(pyridoxal phosphate)lysine.

The protein belongs to the class-II pyridoxal-phosphate-dependent aminotransferase family. Homodimer. Pyridoxal 5'-phosphate is required as a cofactor.

It catalyses the reaction an aromatic L-alpha-amino acid + 2-oxoglutarate = an aromatic oxo-acid + L-glutamate. Functionally, aminotransferase that catalyzes the conversion of aromatic amino acids and 2-oxoglutarate into corresponding aromatic oxo acids and L-glutamate. May catalyze the transamination reaction in phenylalanine biosynthesis. The sequence is that of Aromatic amino acid aminotransferase from Corynebacterium glutamicum (strain ATCC 13032 / DSM 20300 / JCM 1318 / BCRC 11384 / CCUG 27702 / LMG 3730 / NBRC 12168 / NCIMB 10025 / NRRL B-2784 / 534).